Consider the following 329-residue polypeptide: GTPase Obg (329 aa).

Positions 1–159 (MQFIDQARIS…WPLQLELKLL (159 aa)) constitute an Obg domain. Residues 160-328 (AEVGIIGLPN…MLDRVWSELG (169 aa)) enclose the OBG-type G domain. ATP contacts are provided by residues 166–173 (GLPNAGKS), 191–195 (FTTLI), 213–216 (DIPG), 280–283 (NKQE), and 309–311 (SAA). Positions 173 and 193 each coordinate Mg(2+).

It belongs to the TRAFAC class OBG-HflX-like GTPase superfamily. OBG GTPase family. In terms of assembly, monomer. It depends on Mg(2+) as a cofactor.

Its subcellular location is the cytoplasm. Functionally, an essential GTPase which binds GTP, GDP and possibly (p)ppGpp with moderate affinity, with high nucleotide exchange rates and a fairly low GTP hydrolysis rate. Plays a role in control of the cell cycle, stress response, ribosome biogenesis and in those bacteria that undergo differentiation, in morphogenesis control. In Synechococcus sp. (strain CC9311), this protein is GTPase Obg.